A 534-amino-acid polypeptide reads, in one-letter code: Phosphoenolpyruvate carboxykinase (ATP) (534 aa).

3 residues coordinate substrate: R60, Y195, and K201. ATP contacts are provided by residues K201, H221, and 237–245 (GLSGTGKTT). Residues K201 and H221 each coordinate Mn(2+). D258 provides a ligand contact to Mn(2+). E287, R324, and T449 together coordinate ATP. R324 contacts substrate.

The protein belongs to the phosphoenolpyruvate carboxykinase (ATP) family. Mn(2+) serves as cofactor.

The protein resides in the cytoplasm. The enzyme catalyses oxaloacetate + ATP = phosphoenolpyruvate + ADP + CO2. Its pathway is carbohydrate biosynthesis; gluconeogenesis. Involved in the gluconeogenesis. Catalyzes the conversion of oxaloacetate (OAA) to phosphoenolpyruvate (PEP) through direct phosphoryl transfer between the nucleoside triphosphate and OAA. The sequence is that of Phosphoenolpyruvate carboxykinase (ATP) from Flavobacterium johnsoniae (strain ATCC 17061 / DSM 2064 / JCM 8514 / BCRC 14874 / CCUG 350202 / NBRC 14942 / NCIMB 11054 / UW101) (Cytophaga johnsonae).